The chain runs to 258 residues: 5'-nucleotidase SurE (258 aa).

The a divalent metal cation site is built by D18, D19, S49, and N102.

Belongs to the SurE nucleotidase family. A divalent metal cation is required as a cofactor.

It localises to the cytoplasm. The enzyme catalyses a ribonucleoside 5'-phosphate + H2O = a ribonucleoside + phosphate. Its function is as follows. Nucleotidase that shows phosphatase activity on nucleoside 5'-monophosphates. This Vibrio parahaemolyticus serotype O3:K6 (strain RIMD 2210633) protein is 5'-nucleotidase SurE.